The following is a 197-amino-acid chain: Recombination protein RecR (197 aa).

The segment at 57–72 (CSVCFALTEQNPCPIC) adopts a C4-type zinc-finger fold. Positions 79 to 174 (SVICVVETSQ…RVTRLAHGIP (96 aa)) constitute a Toprim domain.

It belongs to the RecR family.

May play a role in DNA repair. It seems to be involved in an RecBC-independent recombinational process of DNA repair. It may act with RecF and RecO. The sequence is that of Recombination protein RecR from Trichlorobacter lovleyi (strain ATCC BAA-1151 / DSM 17278 / SZ) (Geobacter lovleyi).